Reading from the N-terminus, the 785-residue chain is Ubiquitin carboxyl-terminal hydrolase 1 (785 aa).

2 disordered regions span residues 1–21 and 33–52; these read MPGV…SKKN and TKRA…ASEY. The span at 7-16 shows a compositional bias: polar residues; that stretch reads SESNGLSRGS. A phosphoserine mark is found at Ser-16, Ser-42, and Ser-67. Residues 81-785 form the USP domain; the sequence is VGLNNLGNTC…TPYLLFYKKL (705 aa). The active-site Nucleophile is the Cys-90. 2 stretches are compositionally biased toward basic and acidic residues: residues 258 to 275 and 286 to 298; these read EDFK…KSDT and LSKE…ENQR. The segment at 258 to 336 is disordered; it reads EDFKEKLPKG…SPRPSQKKSR (79 aa). Phosphoserine is present on residues Ser-313 and Ser-475. Residue His-593 is the Proton acceptor of the active site. Residues 693–723 are disordered; sequence TAFAENRNSETSDTTGTHESDRNKESSDQTG. The segment covering 708-719 has biased composition (basic and acidic residues); it reads GTHESDRNKESS. Ser-768 is modified (phosphoserine).

The protein belongs to the peptidase C19 family. As to quaternary structure, interacts with FANCD2 and PCNA. Interacts with WDR48. Interacts with ATAD5; the interaction regulates USP1-mediated PCNA deubiquitination. Autocatalytic cleavage of USP1 following UV irradiation inactivates it, leading to an increase in ubiquitinated PCNA, recruitment of POLH and translesion synthesis. In terms of processing, ubiquitinated by the CRL2(KLHDC2) complex following autocatalytic cleavage, leading to its degradation: the CRL2(KLHDC2) complex recognizes the diglycine (Gly-Gly) at the C-terminus.

Its subcellular location is the nucleus. It catalyses the reaction Thiol-dependent hydrolysis of ester, thioester, amide, peptide and isopeptide bonds formed by the C-terminal Gly of ubiquitin (a 76-residue protein attached to proteins as an intracellular targeting signal).. Its function is as follows. Negative regulator of DNA damage repair which specifically deubiquitinates monoubiquitinated FANCD2. Also involved in PCNA-mediated translesion synthesis (TLS) by deubiquitinating monoubiquitinated PCNA. Has almost no deubiquitinating activity by itself and requires the interaction with WDR48 to have a high activity. This chain is Ubiquitin carboxyl-terminal hydrolase 1 (USP1), found in Homo sapiens (Human).